A 212-amino-acid polypeptide reads, in one-letter code: Probable GTP-binding protein EngB (212 aa).

The EngB-type G domain occupies 27–201; the sequence is GGIEIAFAGR…TRILSDWYQP (175 aa). GTP-binding positions include 35–42, 62–66, 80–83, 147–150, and 180–182; these read GRSNAGKS, GRTQL, DLPG, TKAD, and FSS. Residues Ser-42 and Thr-64 each contribute to the Mg(2+) site.

It belongs to the TRAFAC class TrmE-Era-EngA-EngB-Septin-like GTPase superfamily. EngB GTPase family. It depends on Mg(2+) as a cofactor.

Its function is as follows. Necessary for normal cell division and for the maintenance of normal septation. This is Probable GTP-binding protein EngB from Tolumonas auensis (strain DSM 9187 / NBRC 110442 / TA 4).